The sequence spans 314 residues: Thymidylate synthase (314 aa).

DUMP-binding positions include Arg32 and 176-177; that span reads RR. The Nucleophile role is filled by Cys196. Residues 216–219, Asn227, and 257–259 each bind dUMP; these read RSCD and HLY. Position 219 (Asp219) interacts with (6R)-5,10-methylene-5,6,7,8-tetrahydrofolate. Residue Ala313 coordinates (6R)-5,10-methylene-5,6,7,8-tetrahydrofolate.

Belongs to the thymidylate synthase family. Bacterial-type ThyA subfamily. In terms of assembly, homodimer.

The protein resides in the cytoplasm. The catalysed reaction is dUMP + (6R)-5,10-methylene-5,6,7,8-tetrahydrofolate = 7,8-dihydrofolate + dTMP. The protein operates within pyrimidine metabolism; dTTP biosynthesis. Catalyzes the reductive methylation of 2'-deoxyuridine-5'-monophosphate (dUMP) to 2'-deoxythymidine-5'-monophosphate (dTMP) while utilizing 5,10-methylenetetrahydrofolate (mTHF) as the methyl donor and reductant in the reaction, yielding dihydrofolate (DHF) as a by-product. This enzymatic reaction provides an intracellular de novo source of dTMP, an essential precursor for DNA biosynthesis. This is Thymidylate synthase from Novosphingobium aromaticivorans (strain ATCC 700278 / DSM 12444 / CCUG 56034 / CIP 105152 / NBRC 16084 / F199).